The sequence spans 394 residues: T-cell acute lymphocytic leukemia protein 1 (394 aa).

Residues 1-17 (MSLKMMERLSTDMDGTR) are compositionally biased toward basic and acidic residues. Residues 1–49 (MSLKMMERLSTDMDGTRDVASPPARQDAAEPERTVELSGVKEGAAPNSP) are disordered. 7 tandem repeats follow at residues 83-89 (TELCRAT), 94-100 (TELCRAP), 105-111 (TELCRAP), 116-122 (TELCRAP), 127-133 (TELCRPP), 149-155 (SELCRAP), and 167-173 (TELCRPP). Residues 83-173 (TELCRATLTP…TATTELCRPP (91 aa)) form a 7 X 7 AA approximate repeats of [TS]-E-L-C-R-[AP]-P region. Residues 262–314 (VRRIFTNSRERWRQQNVNGAFAELRKLIPTHPPDKKLSKNEILRLAMKYINFL) enclose the bHLH domain. The tract at residues 347-394 (LSPNSSCGSSLDGAPSPDSYSEEHDALDSKHSRNLHQAMLPIDGSGQR) is disordered. Residues 367–377 (SEEHDALDSKH) show a composition bias toward basic and acidic residues.

First expressed in patches on the ventral side of the embryo in a region that will give rise to hematopoietic tissue. By late neurula stages, expressed throughout the ventral blood island region. By tailbud stages, expression extends to probable vascular progenitor cells, but is excluded from the presumptive liver anlage. Also expressed in the central nervous system at the tailbud stage.

The protein localises to the nucleus. Its function is as follows. Transcription factor that acts synergistically with lmo2 and gata1 to specify embryonic dorsal mesoderm to a hematopoietic fate. This chain is T-cell acute lymphocytic leukemia protein 1, found in Xenopus laevis (African clawed frog).